Reading from the N-terminus, the 280-residue chain is Phosphatidylglycerol--prolipoprotein diacylglyceryl transferase (280 aa).

The next 4 membrane-spanning stretches (helical) occupy residues 30–50 (WYGL…RRIV), 71–91 (FLLW…ILFY), 106–126 (IWNG…AMII), and 132–152 (AIPI…GLFF). A 1,2-diacyl-sn-glycero-3-phospho-(1'-sn-glycerol) is bound at residue Arg154. Transmembrane regions (helical) follow at residues 188 to 208 (QLYE…WFVY), 217 to 237 (GLVT…VEFF), and 251 to 271 (WLTM…WAIA).

The protein belongs to the Lgt family.

The protein localises to the cell inner membrane. The catalysed reaction is L-cysteinyl-[prolipoprotein] + a 1,2-diacyl-sn-glycero-3-phospho-(1'-sn-glycerol) = an S-1,2-diacyl-sn-glyceryl-L-cysteinyl-[prolipoprotein] + sn-glycerol 1-phosphate + H(+). It functions in the pathway protein modification; lipoprotein biosynthesis (diacylglyceryl transfer). Functionally, catalyzes the transfer of the diacylglyceryl group from phosphatidylglycerol to the sulfhydryl group of the N-terminal cysteine of a prolipoprotein, the first step in the formation of mature lipoproteins. The sequence is that of Phosphatidylglycerol--prolipoprotein diacylglyceryl transferase from Sinorhizobium medicae (strain WSM419) (Ensifer medicae).